A 178-amino-acid chain; its full sequence is MDLLLLLFSALWYILPAYVANAVPCILGGGKPVDFGKNFFDGNRIIGNGVTYRGTFFGILFGIITGILQHFIVILYMGPKSVFNYGLTGYIILSFLLATGALFGDMLGSFIKRRFNLNQGQSAPLLDQITFIIFALLFAYSLYPVPANIIVLLLVISPIIHFSSNIIAYKLHLKKVWW.

5 helical membrane-spanning segments follow: residues 3–23 (LLLLLFSALWYILPAYVANAV), 56–76 (FFGILFGIITGILQHFIVILY), 91–111 (IILSFLLATGALFGDMLGSFI), 131–151 (FIIFALLFAYSLYPVPANIIV), and 152–172 (LLLVISPIIHFSSNIIAYKLH).

The protein belongs to the CDP-archaeol synthase family. It depends on Mg(2+) as a cofactor.

The protein localises to the cell membrane. The catalysed reaction is 2,3-bis-O-(geranylgeranyl)-sn-glycerol 1-phosphate + CTP + H(+) = CDP-2,3-bis-O-(geranylgeranyl)-sn-glycerol + diphosphate. Its pathway is membrane lipid metabolism; glycerophospholipid metabolism. Catalyzes the formation of CDP-2,3-bis-(O-geranylgeranyl)-sn-glycerol (CDP-archaeol) from 2,3-bis-(O-geranylgeranyl)-sn-glycerol 1-phosphate (DGGGP) and CTP. This reaction is the third ether-bond-formation step in the biosynthesis of archaeal membrane lipids. In Methanococcus maripaludis (strain DSM 14266 / JCM 13030 / NBRC 101832 / S2 / LL), this protein is CDP-archaeol synthase.